A 411-amino-acid polypeptide reads, in one-letter code: LL-diaminopimelate aminotransferase (411 aa).

Positions 16 and 43 each coordinate substrate. Pyridoxal 5'-phosphate-binding positions include Tyr73, 109-110 (AK), Tyr133, Asn188, Tyr219, and 247-249 (SYS). Residues Lys110, Tyr133, and Asn188 each coordinate substrate. N6-(pyridoxal phosphate)lysine is present on Lys250. Pyridoxal 5'-phosphate is bound by residues Arg258 and Asn293. Substrate contacts are provided by Asn293 and Arg389.

This sequence belongs to the class-I pyridoxal-phosphate-dependent aminotransferase family. LL-diaminopimelate aminotransferase subfamily. As to quaternary structure, homodimer. Pyridoxal 5'-phosphate is required as a cofactor.

It carries out the reaction (2S,6S)-2,6-diaminopimelate + 2-oxoglutarate = (S)-2,3,4,5-tetrahydrodipicolinate + L-glutamate + H2O + H(+). It participates in amino-acid biosynthesis; L-lysine biosynthesis via DAP pathway; LL-2,6-diaminopimelate from (S)-tetrahydrodipicolinate (aminotransferase route): step 1/1. Functionally, involved in the synthesis of meso-diaminopimelate (m-DAP or DL-DAP), required for both lysine and peptidoglycan biosynthesis. Catalyzes the direct conversion of tetrahydrodipicolinate to LL-diaminopimelate. This is LL-diaminopimelate aminotransferase from Methanosphaera stadtmanae (strain ATCC 43021 / DSM 3091 / JCM 11832 / MCB-3).